The primary structure comprises 129 residues: Membrane protein 0 (129 aa).

A disordered region spans residues methionine 1–aspartate 25. The PPXY motif motif lies at proline 44 to tyrosine 47. Residues phenylalanine 100–phenylalanine 120 traverse the membrane as a helical segment.

This sequence belongs to the varicellovirus ORF0 protein family. In terms of assembly, interacts with host ITCH; this interaction probably mediates ITCH degradation.

It is found in the host Golgi apparatus membrane. The sequence is that of Membrane protein 0 from Homo sapiens (Human).